A 191-amino-acid polypeptide reads, in one-letter code: PBAN-type neuropeptides (191 aa).

Residues 1–17 (MFSPLLFFAVSISCVLA) form the signal peptide. Residue Leu-44 is modified to Leucine amide. A propeptide spanning residues 48–91 (SLRISTEDNRQAFFKLLEAADALKYYYDRLPYEMQADEPETRVT) is cleaved from the precursor. Leucine amide is present on residues Leu-100, Leu-120, Leu-156, and Leu-166. The propeptide occupies 169–191 (ELSYDMLPSKLRLVRSTNRTQST).

The protein belongs to the pyrokinin family. In terms of tissue distribution, expressed in the subesophageal ganglion.

The protein localises to the secreted. Its function is as follows. A hormone that controls sex pheromone production in females and pheromone responsiveness in male. The protein is PBAN-type neuropeptides of Spodoptera littoralis (Egyptian cotton leafworm).